The sequence spans 345 residues: Endochitinase 4 (345 aa).

Positions 1 to 27 are cleaved as a signal peptide; the sequence is MAPLLNTGLVILPLIVSTLLGPMPAFA. Residues asparagine 29 and asparagine 89 are each glycosylated (N-linked (GlcNAc...) asparagine). In terms of domain architecture, GH18 spans 41 to 345; sequence KVLQGYWENW…TFGDNVKGRL (305 aa). Catalysis depends on glutamate 163, which acts as the Proton donor. A glycan (N-linked (GlcNAc...) asparagine) is linked at asparagine 316.

It belongs to the glycosyl hydrolase 18 family. Chitinase class V subfamily.

It localises to the secreted. It carries out the reaction Random endo-hydrolysis of N-acetyl-beta-D-glucosaminide (1-&gt;4)-beta-linkages in chitin and chitodextrins.. In terms of biological role, secreted chitinase involved in the degradation of chitin, a component of the cell walls of fungi and exoskeletal elements of some animals (including worms and arthropods). Participates in the infection process and directly acts in the penetration process of the host cuticle. This is Endochitinase 4 (chi4) from Metarhizium robertsii (strain ARSEF 23 / ATCC MYA-3075) (Metarhizium anisopliae (strain ARSEF 23)).